We begin with the raw amino-acid sequence, 168 residues long: Peptide deformylase 2 (168 aa).

Positions 91 and 133 each coordinate Fe cation. Glu-134 is a catalytic residue. His-137 serves as a coordination point for Fe cation.

The protein belongs to the polypeptide deformylase family. The cofactor is Fe(2+).

It catalyses the reaction N-terminal N-formyl-L-methionyl-[peptide] + H2O = N-terminal L-methionyl-[peptide] + formate. Removes the formyl group from the N-terminal Met of newly synthesized proteins. Requires at least a dipeptide for an efficient rate of reaction. N-terminal L-methionine is a prerequisite for activity but the enzyme has broad specificity at other positions. This Vibrio parahaemolyticus serotype O3:K6 (strain RIMD 2210633) protein is Peptide deformylase 2.